The chain runs to 1129 residues: DNA-directed RNA polymerase I subunit RPA2 (1129 aa).

A C4-type zinc finger spans residues 1061–1093; the sequence is CHKCGSILAPLQRIVKRNETGGLSSQPDTCRLC.

The protein belongs to the RNA polymerase beta chain family. As to quaternary structure, component of the RNA polymerase I (Pol I) complex consisting of at least 13 subunits.

It is found in the nucleus. Its subcellular location is the nucleolus. The enzyme catalyses RNA(n) + a ribonucleoside 5'-triphosphate = RNA(n+1) + diphosphate. Its function is as follows. DNA-dependent RNA polymerase catalyzes the transcription of DNA into RNA using the four ribonucleoside triphosphates as substrates. Second largest core component of RNA polymerase I which synthesizes ribosomal RNA precursors. Proposed to contribute to the polymerase catalytic activity and forms the polymerase active center together with the largest subunit. Pol I is composed of mobile elements and RPA2 is part of the core element with the central large cleft and probably a clamp element that moves to open and close the cleft. The polypeptide is DNA-directed RNA polymerase I subunit RPA2 (Drosophila melanogaster (Fruit fly)).